A 621-amino-acid polypeptide reads, in one-letter code: Cyclic nucleotide-gated ion channel 11 (621 aa).

The Cytoplasmic segment spans residues M1–T43. A helical membrane pass occupies residues V44–I64. Residues D65 to T76 lie on the Extracellular side of the membrane. The chain crosses the membrane as a helical span at residues L77–I97. Residues Y98–R128 lie on the Cytoplasmic side of the membrane. The chain crosses the membrane as a helical span at residues L129 to L149. At T150 to R162 the chain is on the extracellular side. A helical transmembrane segment spans residues I163–Y183. Residues K184–R198 are Cytoplasmic-facing. The helical transmembrane segment at V199–W219 threads the bilayer. At Y220 to G329 the chain is on the extracellular side. Residues E330 to G350 traverse the membrane as a helical segment. At N351–A621 the chain is on the cytoplasmic side. Residues L435–Q556 and D506 each bind a nucleoside 3',5'-cyclic phosphate. Residues Y549 to Y564 are calmodulin-binding. Residues Q569 to K598 form the IQ domain.

It belongs to the cyclic nucleotide-gated cation channel (TC 1.A.1.5) family. As to quaternary structure, homotetramer or heterotetramer.

It is found in the cell membrane. Putative cyclic nucleotide-gated ion channel. In Arabidopsis thaliana (Mouse-ear cress), this protein is Cyclic nucleotide-gated ion channel 11 (CNGC11).